The primary structure comprises 698 residues: MDGLFAPIPSNPLIDFTILLLVTLILPPIFERLKLPGLVGLLFAGIVLGKSGLGVLNEDSESIKLFTDIGKIYLMFVAGLEIDMVDFRRTRNRSLLYGSLTFAVPLLTGLAVGLTFGYSFNASVLLGSLFASHTLLGYPIVQRLGIVRNQAVMVTIGATIFTDIAALLVLAICISIHSGSFSPAGLVVQLVAIAVYSALVLIGFDWAGREYFRRTGDEQSNQFLFVLLAVFLASVGSELINVDKIVGAFLAGLAVNDVLGNSPVKEKVEFLGTTLFIPFFFIGIGLLLDLPAFLVTLTTLFPLVVAIVVGLILSKGVAAILAQWKLGYTWVEGLTMWSLSIPQVAATLAAAVAGYQAVNAAGDRLVSETVLNTIIVLMLITSIVGPLMTAKFAPKIPIPNTLSSLTEDLDDPEENGAVTLIPPKASTFTVLVPTQNPQTLSYLLEMGALIARHESGVVIPLAIAKAPVHMDDPGLTSRLARNELLLQQATELATNLKVDAHPALRIDDDVARAISHTAREKNADLIIMGWSQQTLGLRAKLFGSTIDSVFWSAHCPVAVMRLLSDPRSFHRILFPIKNLTPQTLELFQFTQRLAETNGAIVTLLHVCPHNTSPQQVQAFKTEMERFLNQCRATADYPIKVICHDDAAKVLVRVSHTFDLVVLRSFRRRSVGGVALGEVTDKILREITSSFVLFGDPYA.

12 consecutive transmembrane segments (helical) span residues 10–30 (SNPL…PPIF), 35–55 (LPGL…GLGV), 65–85 (LFTD…IDMV), 100–120 (LTFA…GYSF), 121–141 (NASV…YPIV), 156–176 (IGAT…CISI), 184–204 (AGLV…LIGF), 222–242 (QFLF…LINV), 275–295 (LFIP…AFLV), 300–320 (LFPL…VAAI), 333–353 (GLTM…AAVA), and 370–390 (VLNT…LMTA).

Belongs to the monovalent cation:proton antiporter 2 (CPA2) transporter (TC 2.A.37) family.

It is found in the membrane. Na(+)/H(+) antiporter. This is Na(+)/H(+) antiporter NhaS5 (nhaS5) from Synechocystis sp. (strain ATCC 27184 / PCC 6803 / Kazusa).